A 445-amino-acid polypeptide reads, in one-letter code: Tubulin beta-1 chain (445 aa).

Residues Q11, E69, S138, G142, T143, G144, N204, and N226 each coordinate GTP. Position 69 (E69) interacts with Mg(2+). The tract at residues 422-445 (QYQDAGMDDEYGEEYEDEAPAEEE) is disordered. Residues 427 to 445 (GMDDEYGEEYEDEAPAEEE) are compositionally biased toward acidic residues.

The protein belongs to the tubulin family. Dimer of alpha and beta chains. A typical microtubule is a hollow water-filled tube with an outer diameter of 25 nm and an inner diameter of 15 nM. Alpha-beta heterodimers associate head-to-tail to form protofilaments running lengthwise along the microtubule wall with the beta-tubulin subunit facing the microtubule plus end conferring a structural polarity. Microtubules usually have 13 protofilaments but different protofilament numbers can be found in some organisms and specialized cells. Requires Mg(2+) as cofactor.

The protein localises to the cytoplasm. It is found in the cytoskeleton. Its function is as follows. Tubulin is the major constituent of microtubules, a cylinder consisting of laterally associated linear protofilaments composed of alpha- and beta-tubulin heterodimers. Microtubules grow by the addition of GTP-tubulin dimers to the microtubule end, where a stabilizing cap forms. Below the cap, tubulin dimers are in GDP-bound state, owing to GTPase activity of alpha-tubulin. In Colletotrichum graminicola (Maize anthracnose fungus), this protein is Tubulin beta-1 chain (TUB1).